A 377-amino-acid chain; its full sequence is Flagellar P-ring protein (377 aa).

The first 30 residues, 1-30 (MLARFLSSLLKASVTALAVVVAFGFAANFA), serve as a signal peptide directing secretion.

The protein belongs to the FlgI family. In terms of assembly, the basal body constitutes a major portion of the flagellar organelle and consists of four rings (L,P,S, and M) mounted on a central rod.

Its subcellular location is the periplasm. The protein resides in the bacterial flagellum basal body. In terms of biological role, assembles around the rod to form the L-ring and probably protects the motor/basal body from shearing forces during rotation. This chain is Flagellar P-ring protein, found in Cupriavidus pinatubonensis (strain JMP 134 / LMG 1197) (Cupriavidus necator (strain JMP 134)).